The primary structure comprises 1105 residues: Ran-binding protein 6 (1105 aa).

Ala-2 is subject to N-acetylalanine. HEAT repeat units lie at residues 219–257 (FKDF…TVPK), 361–399 (KVVL…GCHQ), 402–440 (ESIL…DFAP), and 444–483 (KKFH…DCPK). Residues 333 to 383 (DEMEEDDFDSNAVAAESALDRLACGLGGKVVLPMTKEHIMQMLQSPDWKYR) are ran-GTP binding. The stretch at 806 to 842 (KAKLEGHFKNQELRQVKRQEENYDQQVEMSLQDEDEC) forms a coiled coil. 3 HEAT repeats span residues 866-905 (LPWF…HCSP), 908-946 (FKYV…FGGD), and 949-987 (RSLC…IGKI).

Belongs to the importin beta family.

It is found in the cytoplasm. The protein resides in the nucleus. Functionally, may function in nuclear protein import as nuclear transport receptor. The protein is Ran-binding protein 6 (RANBP6) of Homo sapiens (Human).